A 261-amino-acid polypeptide reads, in one-letter code: Undecaprenyl-diphosphatase (261 aa).

Helical transmembrane passes span 16–36, 40–60, 82–102, 107–127, 140–160, 183–203, 211–231, and 239–259; these read TEFLPVSSSAHLVLVPWLFGF, GLVFDVALHLGTLVAVLVYFW, FWFLVVATIPGVVVGYFLEDI, LRAPLLIGVLLIMMGGVLYLA, IRFGDAMAIGLSQALAIIPGV, FSFLLSTPIIFGAGLMQMLKM, SFVLGVFTSAVVGFLAIWFLI, and FNIFVIYRVLLGLTVIVIALL.

Belongs to the UppP family.

The protein localises to the cell membrane. It catalyses the reaction di-trans,octa-cis-undecaprenyl diphosphate + H2O = di-trans,octa-cis-undecaprenyl phosphate + phosphate + H(+). Functionally, catalyzes the dephosphorylation of undecaprenyl diphosphate (UPP). Confers resistance to bacitracin. The sequence is that of Undecaprenyl-diphosphatase from Desulforudis audaxviator (strain MP104C).